Consider the following 272-residue polypeptide: 2-dehydro-3-deoxyphosphooctonate aldolase (272 aa).

This sequence belongs to the KdsA family.

The protein localises to the cytoplasm. It carries out the reaction D-arabinose 5-phosphate + phosphoenolpyruvate + H2O = 3-deoxy-alpha-D-manno-2-octulosonate-8-phosphate + phosphate. It participates in carbohydrate biosynthesis; 3-deoxy-D-manno-octulosonate biosynthesis; 3-deoxy-D-manno-octulosonate from D-ribulose 5-phosphate: step 2/3. It functions in the pathway bacterial outer membrane biogenesis; lipopolysaccharide biosynthesis. This is 2-dehydro-3-deoxyphosphooctonate aldolase from Geobacter sulfurreducens (strain ATCC 51573 / DSM 12127 / PCA).